The chain runs to 295 residues: Large ribosomal subunit protein uL18 (295 aa).

Over residues 251–261 (PTPKKKTDFAG) the composition is skewed to basic and acidic residues. Positions 251–295 (PTPKKKTDFAGKTKRWNRKKMTFSQRRDRVKQKKASFLRAKQQEG) are disordered. A compositionally biased stretch (basic residues) spans 262–271 (KTKRWNRKKM).

This sequence belongs to the universal ribosomal protein uL18 family. As to quaternary structure, component of the large ribosomal subunit (LSU).

The protein resides in the cytoplasm. It is found in the nucleus. In terms of biological role, component of the ribosome, a large ribonucleoprotein complex responsible for the synthesis of proteins in the cell. The small ribosomal subunit (SSU) binds messenger RNAs (mRNAs) and translates the encoded message by selecting cognate aminoacyl-transfer RNA (tRNA) molecules. The large subunit (LSU) contains the ribosomal catalytic site termed the peptidyl transferase center (PTC), which catalyzes the formation of peptide bonds, thereby polymerizing the amino acids delivered by tRNAs into a polypeptide chain. The nascent polypeptides leave the ribosome through a tunnel in the LSU and interact with protein factors that function in enzymatic processing, targeting, and the membrane insertion of nascent chains at the exit of the ribosomal tunnel. The polypeptide is Large ribosomal subunit protein uL18 (RPL5) (Styela clava (Sea squirt)).